The chain runs to 485 residues: Zinc finger SWIM domain-containing protein 1 (485 aa).

The SWIM-type zinc-finger motif lies at 363–405 (MNIQILEDTHKVQPQPPASCSCYFNQAFHLPCRHILAMLSARR).

The sequence is that of Zinc finger SWIM domain-containing protein 1 (ZSWIM1) from Homo sapiens (Human).